A 41-amino-acid polypeptide reads, in one-letter code: Omega-theraphotoxin-Hg1a (41 aa).

Disulfide bonds link Cys-7–Cys-21, Cys-14–Cys-26, and Cys-20–Cys-33.

This sequence belongs to the neurotoxin 10 (Hwtx-1) family. 56 (SNX-482) subfamily. Expressed by the venom gland.

The protein localises to the secreted. Its function is as follows. Toxin that blocks vertebrate P/Q-type (Cav2.1/CACNA1A) and R-type (Cav2.3/CACNA1E) voltage-gated calcium channels. Also inhibits sodium channels (Nav) in bovine chromaffin cells by delaying sodium channel inactivation. In Hysterocrates gigas (Cameroon red baboon tarantula), this protein is Omega-theraphotoxin-Hg1a.